Here is a 333-residue protein sequence, read N- to C-terminus: 4-hydroxyproline epimerase (333 aa).

Cys90 serves as the catalytic Proton acceptor. Residues 91–92 (GH) and Asp249 each bind substrate. Catalysis depends on Cys253, which acts as the Proton donor. A substrate-binding site is contributed by 254-255 (GT).

The protein belongs to the proline racemase family. Homodimer.

The catalysed reaction is trans-4-hydroxy-L-proline = cis-4-hydroxy-D-proline. Inhibited by iodoacetate, iodoacetamide and by high amounts (10 mM) of pyrrole-2-carboxylic acid (PYC). Not inhibited by PYC at 1 mM. In terms of biological role, allows intracellular utilization of 4-hydroxyproline, one of the major constituents of host collagen, by converting 4-hydroxy-L-proline to 4-hydroxy-D-proline, which can be further metabolized by intracellular 4-hydroxy-D-proline oxidases. Strong B-cell mitogen. Plays an important role in the regulation of intra- and extracellular amino acid pools, allowing the bacterium to profit from host precursors and enzymatic pathways. The sequence is that of 4-hydroxyproline epimerase from Brucella melitensis biotype 1 (strain ATCC 23456 / CCUG 17765 / NCTC 10094 / 16M).